A 451-amino-acid chain; its full sequence is Uronate isomerase (451 aa).

This sequence belongs to the metallo-dependent hydrolases superfamily. Uronate isomerase family. Homotrimer.

The catalysed reaction is D-glucuronate = D-fructuronate. The enzyme catalyses aldehydo-D-galacturonate = keto-D-tagaturonate. Its pathway is carbohydrate metabolism; pentose and glucuronate interconversion. This chain is Uronate isomerase, found in Thermotoga maritima (strain ATCC 43589 / DSM 3109 / JCM 10099 / NBRC 100826 / MSB8).